The primary structure comprises 331 residues: Holliday junction branch migration complex subunit RuvB (331 aa).

The tract at residues 1–182 is large ATPase domain (RuvB-L); the sequence is MSNDTLHKYE…FGIPLHLEFY (182 aa). ATP-binding positions include Leu21, Arg22, Gly63, Lys66, Thr67, Thr68, 129–131, Arg172, Tyr182, and Arg219; that span reads EDY. Residue Thr67 participates in Mg(2+) binding. A small ATPAse domain (RuvB-S) region spans residues 183–254; sequence SVDELVLVIK…FANSALFRLG (72 aa). The head domain (RuvB-H) stretch occupies residues 257–331; sequence GAGFDKMDLK…FEYLLSSKYI (75 aa). DNA is bound by residues Arg310 and Arg315.

This sequence belongs to the RuvB family. In terms of assembly, homohexamer. Forms an RuvA(8)-RuvB(12)-Holliday junction (HJ) complex. HJ DNA is sandwiched between 2 RuvA tetramers; dsDNA enters through RuvA and exits via RuvB. An RuvB hexamer assembles on each DNA strand where it exits the tetramer. Each RuvB hexamer is contacted by two RuvA subunits (via domain III) on 2 adjacent RuvB subunits; this complex drives branch migration. In the full resolvosome a probable DNA-RuvA(4)-RuvB(12)-RuvC(2) complex forms which resolves the HJ.

The protein resides in the cytoplasm. It catalyses the reaction ATP + H2O = ADP + phosphate + H(+). Its function is as follows. The RuvA-RuvB-RuvC complex processes Holliday junction (HJ) DNA during genetic recombination and DNA repair, while the RuvA-RuvB complex plays an important role in the rescue of blocked DNA replication forks via replication fork reversal (RFR). RuvA specifically binds to HJ cruciform DNA, conferring on it an open structure. The RuvB hexamer acts as an ATP-dependent pump, pulling dsDNA into and through the RuvAB complex. RuvB forms 2 homohexamers on either side of HJ DNA bound by 1 or 2 RuvA tetramers; 4 subunits per hexamer contact DNA at a time. Coordinated motions by a converter formed by DNA-disengaged RuvB subunits stimulates ATP hydrolysis and nucleotide exchange. Immobilization of the converter enables RuvB to convert the ATP-contained energy into a lever motion, pulling 2 nucleotides of DNA out of the RuvA tetramer per ATP hydrolyzed, thus driving DNA branch migration. The RuvB motors rotate together with the DNA substrate, which together with the progressing nucleotide cycle form the mechanistic basis for DNA recombination by continuous HJ branch migration. Branch migration allows RuvC to scan DNA until it finds its consensus sequence, where it cleaves and resolves cruciform DNA. This Anaplasma marginale (strain Florida) protein is Holliday junction branch migration complex subunit RuvB.